The sequence spans 277 residues: Phosphonates import ATP-binding protein PhnC 2 (277 aa).

In terms of domain architecture, ABC transporter spans 3–251; sequence ISLNGISVQH…LLQALYAQHL (249 aa). Residue 40-47 coordinates ATP; the sequence is GPSGAGKT.

It belongs to the ABC transporter superfamily. Phosphonates importer (TC 3.A.1.9.1) family. The complex is composed of two ATP-binding proteins (PhnC), two transmembrane proteins (PhnE) and a solute-binding protein (PhnD).

The protein localises to the cell inner membrane. The catalysed reaction is phosphonate(out) + ATP + H2O = phosphonate(in) + ADP + phosphate + H(+). Part of the ABC transporter complex PhnCDE involved in phosphonates import. Responsible for energy coupling to the transport system. This Albidiferax ferrireducens (strain ATCC BAA-621 / DSM 15236 / T118) (Rhodoferax ferrireducens) protein is Phosphonates import ATP-binding protein PhnC 2.